Consider the following 72-residue polypeptide: Translation initiation factor IF-1 (72 aa).

One can recognise an S1-like domain in the interval 1–72 (MAKEDAIELQ…SKGRIVFRAR (72 aa)).

It belongs to the IF-1 family. As to quaternary structure, component of the 30S ribosomal translation pre-initiation complex which assembles on the 30S ribosome in the order IF-2 and IF-3, IF-1 and N-formylmethionyl-tRNA(fMet); mRNA recruitment can occur at any time during PIC assembly.

Its subcellular location is the cytoplasm. In terms of biological role, one of the essential components for the initiation of protein synthesis. Stabilizes the binding of IF-2 and IF-3 on the 30S subunit to which N-formylmethionyl-tRNA(fMet) subsequently binds. Helps modulate mRNA selection, yielding the 30S pre-initiation complex (PIC). Upon addition of the 50S ribosomal subunit IF-1, IF-2 and IF-3 are released leaving the mature 70S translation initiation complex. The chain is Translation initiation factor IF-1 from Aliivibrio fischeri (strain ATCC 700601 / ES114) (Vibrio fischeri).